Reading from the N-terminus, the 491-residue chain is Protein nucleotidyltransferase YdiU (491 aa).

Gly-94, Gly-96, Arg-97, Lys-117, Asp-129, Gly-130, Arg-180, and Arg-187 together coordinate ATP. Catalysis depends on Asp-256, which acts as the Proton acceptor. Residues Asn-257 and Asp-266 each coordinate Mg(2+). Position 266 (Asp-266) interacts with ATP.

This sequence belongs to the SELO family. Mg(2+) is required as a cofactor. It depends on Mn(2+) as a cofactor.

The enzyme catalyses L-seryl-[protein] + ATP = 3-O-(5'-adenylyl)-L-seryl-[protein] + diphosphate. It carries out the reaction L-threonyl-[protein] + ATP = 3-O-(5'-adenylyl)-L-threonyl-[protein] + diphosphate. It catalyses the reaction L-tyrosyl-[protein] + ATP = O-(5'-adenylyl)-L-tyrosyl-[protein] + diphosphate. The catalysed reaction is L-histidyl-[protein] + UTP = N(tele)-(5'-uridylyl)-L-histidyl-[protein] + diphosphate. The enzyme catalyses L-seryl-[protein] + UTP = O-(5'-uridylyl)-L-seryl-[protein] + diphosphate. It carries out the reaction L-tyrosyl-[protein] + UTP = O-(5'-uridylyl)-L-tyrosyl-[protein] + diphosphate. In terms of biological role, nucleotidyltransferase involved in the post-translational modification of proteins. It can catalyze the addition of adenosine monophosphate (AMP) or uridine monophosphate (UMP) to a protein, resulting in modifications known as AMPylation and UMPylation. This Clostridium botulinum (strain 657 / Type Ba4) protein is Protein nucleotidyltransferase YdiU.